A 257-amino-acid chain; its full sequence is Zinc import ATP-binding protein ZnuC (257 aa).

In terms of domain architecture, ABC transporter spans 6–221; it reads IRLDQVGVTF…PAFVELFGKT (216 aa). 38-45 is a binding site for ATP; sequence GPNGAGKT.

Belongs to the ABC transporter superfamily. Zinc importer (TC 3.A.1.15.5) family. The complex is composed of two ATP-binding proteins (ZnuC), two transmembrane proteins (ZnuB) and a solute-binding protein (ZnuA).

It is found in the cell inner membrane. It carries out the reaction Zn(2+)(out) + ATP(in) + H2O(in) = Zn(2+)(in) + ADP(in) + phosphate(in) + H(+)(in). In terms of biological role, part of the ABC transporter complex ZnuABC involved in zinc import. Responsible for energy coupling to the transport system. In Pseudomonas putida (strain ATCC 47054 / DSM 6125 / CFBP 8728 / NCIMB 11950 / KT2440), this protein is Zinc import ATP-binding protein ZnuC.